The sequence spans 279 residues: Fatty-acid-binding protein 1 (279 aa).

Residues R103, Y116, and S183 each coordinate dodecanoate.

Belongs to the chalcone isomerase family. In terms of tissue distribution, expressed in developing cotyledons, young seedlings, roots, seeds, embryos, macrospores, preanthesis and tapetum. Restricted to developing and reproductive tissues.

It localises to the plastid. It is found in the chloroplast stroma. Fatty-acid-binding protein. Interacts preferentially with saturated fatty acid. May be involved in alpha-linolenic (C18:3) metabolism. This is Fatty-acid-binding protein 1 (FAP1) from Arabidopsis thaliana (Mouse-ear cress).